The primary structure comprises 288 residues: MKDRTQELRTAKDSDDDDDVTVTVDRDRFMDEFFEQVEEIRGFIDKIAENVEEVKRKHSAILASPNPDEKTKEELEELMSDIKKTANKVRSKLKSIEQSIEQEEGLNRSSADLRIRKTQHSTLSRKFVEVMSEYNATQSDYRERCKGRIQRQLEITGRTTTSEELEDMLESGNPAIFASGIIMDSSISKQALSEIETRHSEIIKLETSIRELHDMFMDMAMLVESQGEMIDRIEYNVEHAVDYVERAVSDTKKAVKYQSKARRKKIMIIICCVILGIIIASTIGGIFG.

Basic and acidic residues predominate over residues 1–13; that stretch reads MKDRTQELRTAKD. The interval 1–20 is disordered; sequence MKDRTQELRTAKDSDDDDDV. The Cytoplasmic portion of the chain corresponds to 1 to 265; it reads MKDRTQELRT…KYQSKARRKK (265 aa). Phosphoserine is present on residues Ser-14, Ser-64, and Ser-95. The stretch at 68-109 forms a coiled coil; sequence DEKTKEELEELMSDIKKTANKVRSKLKSIEQSIEQEEGLNRS. Ser-188 is subject to Phosphoserine; by DAPK1. The t-SNARE coiled-coil homology domain maps to 192-254; it reads LSEIETRHSE…ERAVSDTKKA (63 aa). Residues Lys-252, Lys-253, and Lys-256 each participate in a glycyl lysine isopeptide (Lys-Gly) (interchain with G-Cter in SUMO) cross-link. The chain crosses the membrane as a helical; Anchor for type IV membrane protein span at residues 266-286; it reads IMIIICCVILGIIIASTIGGI. The Extracellular segment spans residues 287 to 288; the sequence is FG.

It belongs to the syntaxin family. As to quaternary structure, part of the SNARE core complex containing SNAP25, VAMP2 and STX1A; this complex constitutes the basic catalytic machinery of the complex neurotransmitter release apparatus. The SNARE complex interacts with CPLX1. Interacts with STXBP1. The interaction with STXBP1 promotes assembly of the SNARE complex. Interacts (via C-terminus) with KCNB1 (via C-terminus); the interaction increases in a calcium-dependent manner and induces a pore-independent enhancement of exocytosis in neuroendocrine cells, chromaffin cells, pancreatic beta cells and from the soma of dorsal root ganglia (DRG) neurons. Interacts with SYTL4. Interacts with STXBP6. Interacts with PLCL1 (via C2 domain). Interacts with OTOF. Interacts with LGI3. Interacts (via the H3 domain) with SLC6A4 (via the N-terminus); this interaction regulates SLC4A6 channel conductance in thalamocortical neurons. Interacts with SYT6 and SYT8; the interaction is Ca(2+)-dependent. Interacts with VAMP8. Interacts with SNAP23. Interacts with VAPA and SYBU. Interacts with PRRT2. Interacts with SEPT8. Interacts with STXBP5L. Interacts with synaptotagmin-1/SYT1. Interacts with SEPTIN5; in the cerebellar cortex. Interacts with SEPTIN4; in the striatum. Post-translationally, phosphorylated by CK2. Phosphorylation at Ser-188 by DAPK1 significantly decreases its interaction with STXBP1. Phosphorylated by CK2. Phosphorylation at Ser-188 by DAPK1 significantly decreases its interaction with STXBP1. In terms of processing, sumoylated, sumoylation is required for regulation of synaptic vesicle endocytosis. In terms of tissue distribution, expressed in the striatum (at protein level). Expressed in the ileum.

The protein localises to the cytoplasmic vesicle. It is found in the secretory vesicle. The protein resides in the synaptic vesicle membrane. It localises to the synapse. Its subcellular location is the synaptosome. The protein localises to the cell membrane. Functionally, plays an essential role in hormone and neurotransmitter calcium-dependent exocytosis and endocytosis. Part of the SNARE (Soluble NSF Attachment Receptor) complex composed of SNAP25, STX1A and VAMP2 which mediates the fusion of synaptic vesicles with the presynaptic plasma membrane. STX1A and SNAP25 are localized on the plasma membrane while VAMP2 resides in synaptic vesicles. The pairing of the three SNAREs from the N-terminal SNARE motifs to the C-terminal anchors leads to the formation of the SNARE complex, which brings membranes into close proximity and results in final fusion. Participates in the calcium-dependent regulation of acrosomal exocytosis in sperm. Also plays an important role in the exocytosis of hormones such as insulin or glucagon-like peptide 1 (GLP-1). The chain is Syntaxin-1A (Stx1a) from Mus musculus (Mouse).